A 564-amino-acid polypeptide reads, in one-letter code: Pyruvate decarboxylase (564 aa).

Pyruvate is bound by residues D28 and H115. Thiamine diphosphate is bound by residues T390 and 413–415 (GSI). D444 serves as a coordination point for Mg(2+). Thiamine diphosphate contacts are provided by residues 445–446 (GS) and 471–476 (NDGYTI). Residues N471 and G473 each coordinate Mg(2+). Position 477 (E477) interacts with pyruvate.

It belongs to the TPP enzyme family. Homotetramer. Mg(2+) serves as cofactor. Thiamine diphosphate is required as a cofactor.

It catalyses the reaction a 2-oxocarboxylate + H(+) = an aldehyde + CO2. The enzyme catalyses pyruvate + H(+) = acetaldehyde + CO2. The chain is Pyruvate decarboxylase (PDC1) from Candida glabrata (strain ATCC 2001 / BCRC 20586 / JCM 3761 / NBRC 0622 / NRRL Y-65 / CBS 138) (Yeast).